The primary structure comprises 592 residues: MDYSQEAITSLIWILQTLAITSVVFSFGIFLLVRFTQWGKQFWMFAGGYLSPKRSIKPILFFLLIVAMTLLSVRISLVNSEWYKNMYTSLQEFNEHVFWQQMGLFCVIAASSVSAALVSYYLEQRFVINWIEWLNEQLVNKWMAHRAYYKTQYLSENLDNPDQRIQQDVQSYVKTTLSLSTGVIDAVTSMISYTILLWGLAGPMIVLGVEIPHMMVFLVFGYVIFTTLIAFWLGRPLISLNFINERLNANYRYSLIRIKEYAESIAFYAGEKVEKNQLYQQFNAVIHNMWVIIFRTLKFSGFNLVVSQISVVFPLLIQVGRYFEKQIKLGDLMQTLQVFGQLHANLSFFRSTYDNFASYKATLDRLTGFCYAIEKANNKSQTQIHNHPTDVIFKNLSIQNPLGHTLIKHLNITLPQGTSLLIQGKSGAGKTTLLRTIAGLWSYAEGEINCPTHNQLFLSQKPYVPQGNLMSALAYPNNADNISHTQAVEILNKVQLGHLAEQLEKEQDWTRILSLGEQQRLAFARLILHKPAVAFLDEATASMDEGLEFSMYQLLQQELPQTTIISVGHRSTLKTLHQQQLILQDKGQWQVL.

6 helical membrane passes run I12 to L32, P58 to V78, M102 to L122, I191 to I211, M214 to G234, and F299 to V319. Residues P58 to S358 enclose the ABC transmembrane type-1 domain. Residues V391–L592 form the ABC transporter domain. G424–T431 contributes to the ATP binding site.

Belongs to the ABC transporter superfamily.

The protein localises to the cell inner membrane. This is an uncharacterized protein from Haemophilus influenzae (strain ATCC 51907 / DSM 11121 / KW20 / Rd).